The chain runs to 513 residues: Ankyrin repeat-containing protein YIL001W (513 aa).

ANK repeat units follow at residues 8–37 (KNFEELCYSCRTGDMDNVDRLISTGVNVNS) and 41–70 (FDNSPLFLASLCGHEAVVKLLLQRGAVCDR). 2 BTB domains span residues 122-179 (RDIT…KFLY) and 274-360 (PDVQ…DIPW).

This chain is Ankyrin repeat-containing protein YIL001W, found in Saccharomyces cerevisiae (strain ATCC 204508 / S288c) (Baker's yeast).